A 500-amino-acid chain; its full sequence is NADH-quinone oxidoreductase subunit N (500 aa).

Helical transmembrane passes span 6–26 (SWIAVYPELVLLVMACLIALV), 40–60 (ALTLLTLGAVAVMEASYALGG), 69–89 (MVVVDPMGSWLKCFSSIALMI), 106–125 (GGEFFTLSLFALLGMFVMIS), 129–151 (FLVLYMGLELMTLCSYALVALRR), 164–184 (FVLGALASGFLLYGLSMLYGA), 207–227 (LVFGLVFIVAGLAFKLGAVPF), 239–259 (PTAVTLIIGGAPQLAAFAMTI), 276–296 (MLALMAIGSLVIGNLAAVAQT), 302–322 (LAFSTISQMGFLLLGLLAGVV), 337–357 (MFYALTYVLTTLAAFGIILLL), 380–400 (YAGVMAMSMFSLAGLPPLVGF), 417–437 (SYLVLAVFAVFMSLIGAFYYL), and 464–484 (IVLAINGALLLVLGIAPSSLM).

Belongs to the complex I subunit 2 family. In terms of assembly, NDH-1 is composed of 14 different subunits. Subunits NuoA, H, J, K, L, M, N constitute the membrane sector of the complex.

It localises to the cell inner membrane. The catalysed reaction is a quinone + NADH + 5 H(+)(in) = a quinol + NAD(+) + 4 H(+)(out). In terms of biological role, NDH-1 shuttles electrons from NADH, via FMN and iron-sulfur (Fe-S) centers, to quinones in the respiratory chain. The immediate electron acceptor for the enzyme in this species is believed to be ubiquinone. Couples the redox reaction to proton translocation (for every two electrons transferred, four hydrogen ions are translocated across the cytoplasmic membrane), and thus conserves the redox energy in a proton gradient. This chain is NADH-quinone oxidoreductase subunit N, found in Polaromonas naphthalenivorans (strain CJ2).